Consider the following 360-residue polypeptide: Phospho-N-acetylmuramoyl-pentapeptide-transferase (360 aa).

10 consecutive transmembrane segments (helical) span residues 26 to 46, 73 to 93, 98 to 118, 132 to 152, 168 to 188, 199 to 219, 236 to 256, 263 to 283, 288 to 308, and 338 to 358; these read SIMA…KVIN, TMGG…WADL, VWFT…DDYW, WKYF…YAMG, VMPQ…VGTS, GLAI…AWAT, SGEL…FLWY, VFMG…IAVL, LLLL…ILQV, and VIVR…VTLK.

This sequence belongs to the glycosyltransferase 4 family. MraY subfamily. Requires Mg(2+) as cofactor.

It is found in the cell inner membrane. The enzyme catalyses UDP-N-acetyl-alpha-D-muramoyl-L-alanyl-gamma-D-glutamyl-meso-2,6-diaminopimeloyl-D-alanyl-D-alanine + di-trans,octa-cis-undecaprenyl phosphate = di-trans,octa-cis-undecaprenyl diphospho-N-acetyl-alpha-D-muramoyl-L-alanyl-D-glutamyl-meso-2,6-diaminopimeloyl-D-alanyl-D-alanine + UMP. It functions in the pathway cell wall biogenesis; peptidoglycan biosynthesis. Catalyzes the initial step of the lipid cycle reactions in the biosynthesis of the cell wall peptidoglycan: transfers peptidoglycan precursor phospho-MurNAc-pentapeptide from UDP-MurNAc-pentapeptide onto the lipid carrier undecaprenyl phosphate, yielding undecaprenyl-pyrophosphoryl-MurNAc-pentapeptide, known as lipid I. This is Phospho-N-acetylmuramoyl-pentapeptide-transferase from Haemophilus ducreyi (strain 35000HP / ATCC 700724).